Reading from the N-terminus, the 603-residue chain is Geraniol synthase, chloroplastic (603 aa).

The transit peptide at 1-50 (MALQMIAPFLSSFLPNPRHSLAAHGLTHQKCVSKHISCSTTTPTYSTTVP) directs the protein to the chloroplast. 5 residues coordinate (2E)-geranyl diphosphate: arginine 301, aspartate 338, aspartate 342, arginine 479, and aspartate 482. Aspartate 338 and aspartate 342 together coordinate Mg(2+). Positions 338–342 (DDIYD) match the DDXXD motif motif. Mg(2+) contacts are provided by aspartate 482, threonine 486, and glutamate 490.

It belongs to the terpene synthase family. Tpsb subfamily. In terms of assembly, homodimer. The cofactor is Mg(2+). Mn(2+) is required as a cofactor. In terms of tissue distribution, expressed in the oil cells of the leaves.

Its subcellular location is the plastid. It is found in the chloroplast. The enzyme catalyses (2E)-geranyl diphosphate + H2O = (2E)-geraniol + diphosphate. Its pathway is secondary metabolite biosynthesis; terpenoid biosynthesis. Its function is as follows. Monoterpene synthase that catalyzes the formation of geraniol from geranyl diphosphate. The sequence is that of Geraniol synthase, chloroplastic (GerS) from Cinnamomum tenuipile (Alseodaphne mollis).